We begin with the raw amino-acid sequence, 508 residues long: DNA-directed RNA polymerase subunit alpha (508 aa).

An alpha N-terminal domain (alpha-NTD) region spans residues 1-380 (MKHILLSCVE…HLFSPFLQTH (380 aa)). The segment at 434 to 508 (NLVTAIQTLD…LKNFGVLPTS (75 aa)) is alpha C-terminal domain (alpha-CTD).

This sequence belongs to the RNA polymerase alpha chain family. In terms of assembly, in plastids the minimal PEP RNA polymerase catalytic core is composed of four subunits: alpha, beta, beta', and beta''. When a (nuclear-encoded) sigma factor is associated with the core the holoenzyme is formed, which can initiate transcription.

The protein localises to the plastid. The protein resides in the chloroplast. The enzyme catalyses RNA(n) + a ribonucleoside 5'-triphosphate = RNA(n+1) + diphosphate. DNA-dependent RNA polymerase catalyzes the transcription of DNA into RNA using the four ribonucleoside triphosphates as substrates. The protein is DNA-directed RNA polymerase subunit alpha (rpoA) of Oltmannsiellopsis viridis (Marine flagellate).